Consider the following 1091-residue polypeptide: Error-prone DNA polymerase (1091 aa).

Residues 1-51 are disordered; the sequence is MGWSNGPPSWAEMERVLNGKPRHAGVPAFDADGDVPRSRKRGAYQPPGRER.

The protein belongs to the DNA polymerase type-C family. DnaE2 subfamily.

Its subcellular location is the cytoplasm. It carries out the reaction DNA(n) + a 2'-deoxyribonucleoside 5'-triphosphate = DNA(n+1) + diphosphate. Its function is as follows. DNA polymerase involved in damage-induced mutagenesis and translesion synthesis (TLS). It is not the major replicative DNA polymerase. The sequence is that of Error-prone DNA polymerase from Mycobacterium bovis (strain ATCC BAA-935 / AF2122/97).